The chain runs to 511 residues: Early growth response protein 1 (511 aa).

Disordered stretches follow at residues 133–169 (ASIP…LSCS) and 291–312 (PSRM…RPYA). Residues 137–169 (SSTSQATHPSSSSTSSIPSSSSSSTSSASLSCS) are compositionally biased toward low complexity. 3 C2H2-type zinc fingers span residues 311 to 335 (YACP…IRIH), 341 to 363 (FQCR…IRTH), and 369 to 391 (FACE…TKIH). Residues 384 to 406 (RKRHTKIHMRQKDKKAEKGATAA) are disordered. Residues 386-396 (RHTKIHMRQKD) show a composition bias toward basic residues.

Belongs to the EGR C2H2-type zinc-finger protein family. Detected in muscle and brain.

It localises to the nucleus. Its subcellular location is the cytoplasm. In terms of biological role, transcriptional regulator. Recognizes and binds to the DNA sequence 5'-GCG(T/G)GGGCG-3'(EGR-site) in the promoter region of target genes. Binds double-stranded target DNA, irrespective of the cytosine methylation status. Regulates the transcription of numerous target genes, and thereby plays an important role in regulating the response to growth factors, DNA damage, and ischemia. Plays a role in the regulation of cell survival, proliferation and cell death. Mediates responses to ischemia and hypoxia; regulates the expression of proteins that are involved in inflammatory processes. Plays a role in regulating the expression of circadian clock genes. Plays a role in the organization of Muller glia cells in the inner and outer plexiform layers of the retina. The sequence is that of Early growth response protein 1 (egr1) from Danio rerio (Zebrafish).